The primary structure comprises 289 residues: Fatty acid elongase 1 (289 aa).

7 helical membrane-spanning segments follow: residues 22 to 42 (VVGY…KLFA), 72 to 92 (AMVL…STVT), 123 to 143 (FWIG…IFLV), 152 to 172 (FLHW…YCVG), 177 to 197 (IWVA…FAIA), 208 to 228 (WAPY…FVTL), and 251 to 271 (LLMY…AHVL). Residues 154 to 158 (HWYHH) carry the HxxHH motif motif. The active-site Nucleophile is the H157. N282 carries an N-linked (GlcNAc...) asparagine glycan.

Belongs to the ELO family.

It is found in the endoplasmic reticulum membrane. It carries out the reaction an acyl-CoA + malonyl-CoA + H(+) = a 3-oxoacyl-CoA + CO2 + CoA. Its pathway is lipid metabolism; fatty acid biosynthesis. Its function is as follows. Involved in the synthesis of fatty acids. Elongates C4 fatty acids. Required for the normal mitochondrial function, energy metabolism and growth of epimastigotes. This Trypanosoma cruzi (strain CL Brener) protein is Fatty acid elongase 1.